The sequence spans 644 residues: MPEPHAVLYVTNELSHIVKDGFLPIWKLTGDESLNDLWLENGKYATDVYAYGDVSKWTIRQLRGHGFIFISTHKNVQLADIIKTVDVRIPREVARSHDMKAFENEIGRRRIRMRKGFGDALRNYAFKMAIEFHGSEAETLNDANPRLHKIYGMPEIPPLYMEYAEIGTRFDDEPTDEKLVSMLDYIVYSAEEVHYIGCGDLRTLMQFKKRSPGRFRRVLWHVYDPIAPECSDPNVIVHNIMVDSKKDILKHMNFLKRVERLFIWDVSSDRSQMNDHEWETTRFAEDRLGEEIAYEMGGAFSSALIKHRIPNSKDEYHCISTYLFPQPGADADMYELRNFMRLRGYSHVDRHMHPDASVTKVVSRDVRKMVELYHGRDRGRFLKKRLFEHLHIVRKNGLLHESDEPRADLFYLTNRCNMGLEPSIYEVMKKSVIATAWVGRAPLYDYDDFALPRSTVMLNGSYRDIRILDGNGAILFLMWRYPDIVKKDLTYDPAWAMNFAVSLKEPIPDPPVPDISLCRFIGLRVESSVLRVRNPTLHETADELKRMGLDLSGHLYVTLMSGAYVTDLFWWFKMILDWSAQNREQKLRDLKRSAAEVIEWKEQMAERPWHVRNDLIAALREYKRKMGMREGASIDSWLELLRHL.

It belongs to the orbivirus VP4 family.

Its subcellular location is the virion. Functionally, the VP4 protein is one of the five proteins (with VP1, VP3, VP6 and VP7) which form the inner capsid of the virus. The sequence is that of Core protein VP4 (Segment-4) from Antilocapra americana (Pronghorn).